The primary structure comprises 548 residues: uncharacterized protein (548 aa).

Positions 8 to 200 constitute a DhaL domain; sequence KLFADMIIQG…LLCVYEGFLK (193 aa).

This is an uncharacterized protein from Staphylococcus aureus (strain bovine RF122 / ET3-1).